The chain runs to 138 residues: MKIDIHSHILPKEWPDLKKRFGYXGWVELQHHSEGEAKMLKDGKVFRVVQERFVGLGTLPMQAPXSLFVHPWDMQYWFPWLIGMPAETTTAXESMMMGGVFEKVXFAHGGGSFPFTVGRIVILGTDYPFPLGELEPGK.

2 residues coordinate Zn(2+): His6 and His8. Arg47 serves as a coordination point for substrate. Positions 70 and 126 each coordinate Zn(2+).

The protein belongs to the metallo-dependent hydrolases superfamily. ACMSD family. As to quaternary structure, monomer.

The enzyme catalyses 2-amino-3-carboxymuconate 6-semialdehyde + H(+) = 2-aminomuconate 6-semialdehyde + CO2. Its pathway is secondary metabolite metabolism; quinolate metabolism. Its function is as follows. Converts alpha-amino-beta-carboxymuconate-epsilon-semialdehyde (ACMS) to alpha-aminomuconate semialdehyde (AMS). ACMS can be converted non-enzymatically to quinolate (QA), a key precursor of NAD, and a potent endogenous excitotoxin of neuronal cells which is implicated in the pathogenesis of various neurodegenerative disorders. In the presence of ACMSD, ACMS is converted to AMS, a benign catabolite. ACMSD ultimately controls the metabolic fate of tryptophan catabolism along the kynurenine pathway. This Sus scrofa (Pig) protein is 2-amino-3-carboxymuconate-6-semialdehyde decarboxylase (ACMSD).